A 114-amino-acid chain; its full sequence is NADH-ubiquinone oxidoreductase chain 3 (114 aa).

The next 3 membrane-spanning stretches (helical) occupy residues L3–Y23, I52–L72, and T86–L106.

It belongs to the complex I subunit 3 family.

It is found in the mitochondrion membrane. It catalyses the reaction a ubiquinone + NADH + 5 H(+)(in) = a ubiquinol + NAD(+) + 4 H(+)(out). In terms of biological role, core subunit of the mitochondrial membrane respiratory chain NADH dehydrogenase (Complex I) that is believed to belong to the minimal assembly required for catalysis. Complex I functions in the transfer of electrons from NADH to the respiratory chain. The immediate electron acceptor for the enzyme is believed to be ubiquinone. This chain is NADH-ubiquinone oxidoreductase chain 3 (MT-ND3), found in Lycodon semicarinatus (Ryukyu odd-tooth snake).